We begin with the raw amino-acid sequence, 689 residues long: Elongation factor G 1 (689 aa).

Positions 7 to 282 (DQVRTIGIIS…AVVDFLPSPL (276 aa)) constitute a tr-type G domain. GTP is bound by residues 16–23 (SHIDAGKT), 80–84 (DTPGH), and 134–137 (NKMD).

The protein belongs to the TRAFAC class translation factor GTPase superfamily. Classic translation factor GTPase family. EF-G/EF-2 subfamily.

The protein localises to the cytoplasm. In terms of biological role, catalyzes the GTP-dependent ribosomal translocation step during translation elongation. During this step, the ribosome changes from the pre-translocational (PRE) to the post-translocational (POST) state as the newly formed A-site-bound peptidyl-tRNA and P-site-bound deacylated tRNA move to the P and E sites, respectively. Catalyzes the coordinated movement of the two tRNA molecules, the mRNA and conformational changes in the ribosome. The polypeptide is Elongation factor G 1 (Geobacter sulfurreducens (strain ATCC 51573 / DSM 12127 / PCA)).